The following is a 494-amino-acid chain: Subtilisin-like serine protease Pen ch 18.0101 (494 aa).

The first 16 residues, 1–16 (MKGFLSLTLLPLLVAA), serve as a signal peptide directing secretion. Positions 17–136 (SPVAVNSIHN…IEKDSEVRTM (120 aa)) are cleaved as a propeptide — removed in mature form. One can recognise an Inhibitor I9 domain in the interval 43 to 136 (SYIVVFKKHV…IEKDSEVRTM (94 aa)). In terms of domain architecture, Peptidase S8 spans 146-448 (PWGLARISHR…GGSANYTKIL (303 aa)). IgE-binding stretches follow at residues 180–198 (VIDT…RANW) and 209–231 (EDGN…GVAK). Residues Asp-182 and His-214 each act as charge relay system in the active site. N-linked (GlcNAc...) asparagine glycosylation is found at Asn-244 and Asn-280. Ser-376 serves as the catalytic Charge relay system. N-linked (GlcNAc...) asparagine glycosylation occurs at Asn-443. A propeptide spans 454-494 (KAHNAETTVEDRIGIIIDSAEKAFHKELGAIYSEIKDAVSV) (removed in mature form).

It belongs to the peptidase S8 family.

Functionally, serine protease. In Penicillium rubens, this protein is Subtilisin-like serine protease Pen ch 18.0101.